We begin with the raw amino-acid sequence, 137 residues long: MSMFKEFRDFAMRGNVVDLAVGVIIGAAFGKIVSSLVANIIMPPLGLLIGGVDFKQFSWILKPADGAAPAVVMEYGVFLQTVFDFVIVAFAIFMAIKLMNRLYTKKEVEKPVAKPSAEETLLSEIRDLLKEQNGKAQ.

Helical transmembrane passes span 10–30 (FAMRGNVVDLAVGVIIGAAFG) and 76–96 (GVFLQTVFDFVIVAFAIFMAI).

It belongs to the MscL family. Homopentamer.

The protein resides in the cell inner membrane. In terms of biological role, channel that opens in response to stretch forces in the membrane lipid bilayer. May participate in the regulation of osmotic pressure changes within the cell. The protein is Large-conductance mechanosensitive channel of Erwinia tasmaniensis (strain DSM 17950 / CFBP 7177 / CIP 109463 / NCPPB 4357 / Et1/99).